The following is a 548-amino-acid chain: C2H2-type transcription factor MSN2 (548 aa).

C2H2-type zinc fingers lie at residues phenylalanine 420–proline 448 and phenylalanine 449–histidine 471.

As to quaternary structure, interacts with HOG1/OSM1.

It is found in the nucleus. The protein resides in the cytoplasm. Transcription factor that acts as a key downstream transcription factor in the HOG1-MAPK pathway. Regulates the expression of a series of downstream genes and controls vegetative growth, conidiogenesis, cell wall integrity, stress response, mitochondrial morphology, and pathogenicity. Binds to a putative promoter region 1500 bp upstream of the start codons of the target genes MGG_07019, POX1 and DCI1. Binds to the AGGGG and CCCCT motif of the COS1 promoter region. Involved in fatty acid beta-oxidation by directly regulating the expression of the dienoyl-CoA isomerase DCI1, thereby facilitating invasive hyphal growth during the early infection stage. Targets also the 3-methylglutaconyl-CoA hydratase-encoding gene (AUH1) to control mitochondrial morphology and mitophagy, which are critical for the infectious growth of the pathogen. The protein is C2H2-type transcription factor MSN2 of Pyricularia oryzae (strain 70-15 / ATCC MYA-4617 / FGSC 8958) (Rice blast fungus).